The sequence spans 329 residues: Haptoglobin (329 aa).

Asn-9 carries N-linked (GlcNAc...) asparagine glycosylation. Positions 13–70 constitute a Sushi domain; that stretch reads VSLPKPPVIENGYVEHMIRYQCKPFYKLHTEGDGVYTLNSEKHWTNKAVGEKLPECEA. Disulfide bonds link Cys-34/Cys-68 and Cys-72/Cys-189. Residue Arg-84 is a propeptide. In terms of domain architecture, Peptidase S1 spans 85 to 327; it reads IMGGSVDAKG…VLAWVQETIA (243 aa). Asn-107 and Asn-214 each carry an N-linked (GlcNAc...) asparagine glycan. Disulfide bonds link Cys-232/Cys-263 and Cys-274/Cys-304. Residues 241–246 form an interaction with CD163 region; it reads VPEKKS.

This sequence belongs to the peptidase S1 family. In terms of assembly, tetramer of two alpha and two beta chains; disulfide-linked. The hemoglobin/haptoglobin complex is composed of a haptoglobin dimer bound to two hemoglobin alpha-beta dimers. Interacts with CD163. Interacts with ERGIC3. As to expression, expressed by the liver and secreted in plasma.

It localises to the secreted. The protein resides in the extracellular space. Its function is as follows. As a result of hemolysis, hemoglobin is found to accumulate in the kidney and is secreted in the urine. Haptoglobin captures, and combines with free plasma hemoglobin to allow hepatic recycling of heme iron and to prevent kidney damage. Haptoglobin also acts as an antioxidant, has antibacterial activity and plays a role in modulating many aspects of the acute phase response. Hemoglobin/haptoglobin complexes are rapidly cleared by the macrophage CD163 scavenger receptor expressed on the surface of liver Kupfer cells through an endocytic lysosomal degradation pathway. This is Haptoglobin (HP) from Canis lupus familiaris (Dog).